Here is a 411-residue protein sequence, read N- to C-terminus: Adenylosuccinate synthetase (411 aa).

GTP is bound by residues 11 to 17 (GDEGKGK) and 39 to 41 (GHT). D12 acts as the Proton acceptor in catalysis. The Mg(2+) site is built by D12 and G39. IMP contacts are provided by residues 12–15 (DEGK), 37–40 (NAGH), T121, R135, Q215, T230, and R294. H40 functions as the Proton donor in the catalytic mechanism. Substrate is bound at residue 290 to 296 (TTTKRPR). GTP-binding positions include R296, 322 to 324 (KLD), and 400 to 402 (STS).

Belongs to the adenylosuccinate synthetase family. As to quaternary structure, homodimer. Requires Mg(2+) as cofactor.

The protein localises to the cytoplasm. It catalyses the reaction IMP + L-aspartate + GTP = N(6)-(1,2-dicarboxyethyl)-AMP + GDP + phosphate + 2 H(+). It participates in purine metabolism; AMP biosynthesis via de novo pathway; AMP from IMP: step 1/2. Plays an important role in the de novo pathway of purine nucleotide biosynthesis. Catalyzes the first committed step in the biosynthesis of AMP from IMP. This Helicobacter pylori (strain ATCC 700392 / 26695) (Campylobacter pylori) protein is Adenylosuccinate synthetase.